The sequence spans 191 residues: Heme-binding protein 1 (191 aa).

This sequence belongs to the HEBP family. In terms of assembly, monomer.

Its subcellular location is the cytoplasm. In terms of biological role, may bind free porphyrinogens that may be present in the cell and thus facilitate removal of these potentially toxic compound. Binds with a high affinity to one molecule of heme or porphyrins. It binds metalloporphyrins, free porphyrins and N-methylprotoporphyrin with similar affinities. The sequence is that of Heme-binding protein 1 (HEBP1) from Bos taurus (Bovine).